A 406-amino-acid chain; its full sequence is Cyclin-dependent kinase 4 homolog (406 aa).

A Protein kinase domain is found at 102-388; the sequence is TFLFQALGKG…ARGALSHPFL (287 aa). ATP is bound by residues 108–116 and Lys131; that span reads LGKGAYGNV. Catalysis depends on Asp233, which acts as the Proton acceptor. Residues Asn238 and Asp251 each coordinate Mg(2+).

It belongs to the protein kinase superfamily. CMGC Ser/Thr protein kinase family. CDC2/CDKX subfamily. Interacts with cyd-1; the interaction is likely involved in regulating cdk-4 activity. Requires Mg(2+) as cofactor.

It carries out the reaction L-seryl-[protein] + ATP = O-phospho-L-seryl-[protein] + ADP + H(+). The catalysed reaction is L-threonyl-[protein] + ATP = O-phospho-L-threonyl-[protein] + ADP + H(+). In terms of biological role, serine/threonine-protein kinase which, in association with cyclin D-like protein cyd-1, is required for the progression through the G1 phase of the cell cycle during postembryonic development by phosphorylating and inhibiting lin-35 and fzr-1. In complex with cyd-1, involved in sex determination during gonadogenesis by regulating the asymmetric division of the somatic gonadal precursor cell (SGP). The protein is Cyclin-dependent kinase 4 homolog of Caenorhabditis elegans.